The primary structure comprises 360 residues: Photosystem II protein D1 (360 aa).

3 helical membrane-spanning segments follow: residues 29-46, 118-133, and 142-156; these read YIGW…TATS, HFLL…EWEL, and WIFV…AASA. His118 is a binding site for chlorophyll a. Tyr126 provides a ligand contact to pheophytin a. Positions 170 and 189 each coordinate [CaMn4O5] cluster. A helical transmembrane segment spans residues 197–218; it reads FHMAGVAGVFGGSLFSAMHGSL. His198 is a chlorophyll a binding site. A quinone-binding positions include His215 and 264–265; that span reads SF. Fe cation is bound at residue His215. Fe cation is bound at residue His272. Residues 274-288 form a helical membrane-spanning segment; that stretch reads FLALWPVVGIWLTAM. Residues His332, Glu333, Asp342, and Ala344 each coordinate [CaMn4O5] cluster. Positions 345-360 are excised as a propeptide; it reads SGEVLPVALTAPAVNG.

It belongs to the reaction center PufL/M/PsbA/D family. In terms of assembly, PSII is composed of 1 copy each of membrane proteins PsbA, PsbB, PsbC, PsbD, PsbE, PsbF, PsbH, PsbI, PsbJ, PsbK, PsbL, PsbM, PsbT, PsbX, PsbY, PsbZ, Psb30/Ycf12, at least 3 peripheral proteins of the oxygen-evolving complex and a large number of cofactors. It forms dimeric complexes. It depends on The D1/D2 heterodimer binds P680, chlorophylls that are the primary electron donor of PSII, and subsequent electron acceptors. It shares a non-heme iron and each subunit binds pheophytin, quinone, additional chlorophylls, carotenoids and lipids. D1 provides most of the ligands for the Mn4-Ca-O5 cluster of the oxygen-evolving complex (OEC). There is also a Cl(-1) ion associated with D1 and D2, which is required for oxygen evolution. The PSII complex binds additional chlorophylls, carotenoids and specific lipids. as a cofactor. Tyr-161 forms a radical intermediate that is referred to as redox-active TyrZ, YZ or Y-Z. In terms of processing, C-terminally processed by CTPA; processing is essential to allow assembly of the oxygen-evolving complex and thus photosynthetic growth.

The protein resides in the plastid. Its subcellular location is the chloroplast thylakoid membrane. The catalysed reaction is 2 a plastoquinone + 4 hnu + 2 H2O = 2 a plastoquinol + O2. Functionally, photosystem II (PSII) is a light-driven water:plastoquinone oxidoreductase that uses light energy to abstract electrons from H(2)O, generating O(2) and a proton gradient subsequently used for ATP formation. It consists of a core antenna complex that captures photons, and an electron transfer chain that converts photonic excitation into a charge separation. The D1/D2 (PsbA/PsbD) reaction center heterodimer binds P680, the primary electron donor of PSII as well as several subsequent electron acceptors. This chain is Photosystem II protein D1, found in Phaeodactylum tricornutum (strain CCAP 1055/1).